We begin with the raw amino-acid sequence, 314 residues long: Acetaldehyde dehydrogenase 1 (314 aa).

16–19 (SGNI) is an NAD(+) binding site. Catalysis depends on Cys134, which acts as the Acyl-thioester intermediate. Residues 165 to 173 (SAGPGTRAN) and Asn292 contribute to the NAD(+) site.

This sequence belongs to the acetaldehyde dehydrogenase family.

It catalyses the reaction acetaldehyde + NAD(+) + CoA = acetyl-CoA + NADH + H(+). The chain is Acetaldehyde dehydrogenase 1 (mhpF) from Cupriavidus necator (strain ATCC 17699 / DSM 428 / KCTC 22496 / NCIMB 10442 / H16 / Stanier 337) (Ralstonia eutropha).